Here is a 255-residue protein sequence, read N- to C-terminus: Hydroxyacylglutathione hydrolase (255 aa).

Histidine 55, histidine 57, aspartate 59, histidine 60, histidine 111, aspartate 131, and histidine 169 together coordinate Zn(2+).

The protein belongs to the metallo-beta-lactamase superfamily. Glyoxalase II family. In terms of assembly, monomer. The cofactor is Zn(2+).

It carries out the reaction an S-(2-hydroxyacyl)glutathione + H2O = a 2-hydroxy carboxylate + glutathione + H(+). Its pathway is secondary metabolite metabolism; methylglyoxal degradation; (R)-lactate from methylglyoxal: step 2/2. Functionally, thiolesterase that catalyzes the hydrolysis of S-D-lactoyl-glutathione to form glutathione and D-lactic acid. This chain is Hydroxyacylglutathione hydrolase, found in Chromohalobacter salexigens (strain ATCC BAA-138 / DSM 3043 / CIP 106854 / NCIMB 13768 / 1H11).